A 327-amino-acid polypeptide reads, in one-letter code: GMP reductase (327 aa).

Residue cysteine 175 is the Thioimidate intermediate of the active site. 204 to 227 lines the NADP(+) pocket; it reads IIADGGIRTHGDVAKSIRFGATMV.

The protein belongs to the IMPDH/GMPR family. GuaC type 2 subfamily.

It catalyses the reaction IMP + NH4(+) + NADP(+) = GMP + NADPH + 2 H(+). Its function is as follows. Catalyzes the irreversible NADPH-dependent deamination of GMP to IMP. It functions in the conversion of nucleobase, nucleoside and nucleotide derivatives of G to A nucleotides, and in maintaining the intracellular balance of A and G nucleotides. This is GMP reductase from Bacillus cereus (strain ATCC 10987 / NRS 248).